Consider the following 614-residue polypeptide: Putative binding protein BMEII0691 (614 aa).

Positions Met-1–Ala-28 are cleaved as a signal peptide.

It belongs to the bacterial solute-binding protein 5 family.

The protein resides in the periplasm. The chain is Putative binding protein BMEII0691 from Brucella melitensis biotype 1 (strain ATCC 23456 / CCUG 17765 / NCTC 10094 / 16M).